Reading from the N-terminus, the 296-residue chain is Protein-export membrane protein SecF (296 aa).

Helical transmembrane passes span Met23–Val43, Ala144–Val164, Val169–Ile189, Ala194–Thr214, Gly236–Ala256, and Val265–Leu285.

It belongs to the SecD/SecF family. SecF subfamily. In terms of assembly, part of the protein translocation apparatus. Forms a complex with SecD.

It is found in the cell membrane. Its function is as follows. Involved in protein export. The sequence is that of Protein-export membrane protein SecF from Pyrococcus furiosus (strain ATCC 43587 / DSM 3638 / JCM 8422 / Vc1).